A 464-amino-acid polypeptide reads, in one-letter code: MPAEMQAPQWLLLLLVILPATGSDPVLCFTQYEESSGRCKGLLGRDIRVEDCCLNAAYAFQEHDGGLCQACRSPQWSAWSLWGPCSVTCSEGSQLRHRRCVGRGGQCSENVAPGTLEWQLQACEDQPCCPEMGGWSEWGPWGPCSVTCSKGTQIRQRVCDNPAPKCGGHCPGEAQQSQACDTQKTCPTHGAWASWGPWSPCSGSCLGGAQEPKETRSRSCSAPAPSHQPPGKPCSGPAYEHKACSGLPPCPVAGGWGPWSPLSPCSVTCGLGQTLEQRTCDHPAPRHGGPFCAGDATRNQMCNKAVPCPVNGEWEAWGKWSDCSRLRMSINCEGTPGQQSRSRSCGGRKFNGKPCAGKLQDIRHCYNIHNCIMKGSWSQWSTWSLCTPPCSPNATRVRQRLCTPLLPKYPPTVSMVEGQGEKNVTFWGTPRPLCEALQGQKLVVEEKRSCLHVPVCKDPEEKKP.

A signal peptide spans 1–22 (MPAEMQAPQWLLLLLVILPATG). TSP type-1 domains lie at 24 to 72 (DPVL…QACR), 73 to 130 (SPQW…PCCP), 132 to 187 (MGGW…KTCP), 189 to 251 (HGAW…PPCP), 253 to 309 (AGGW…VPCP), 311 to 372 (NGEW…HNCI), and 374 to 457 (KGSW…PVCK). 3 disulfides stabilise this stretch: C28–C52, C39–C68, and C53–C71. Residues W79 and W82 are each glycosylated (C-linked (Man) tryptophan). 7 disulfide bridges follow: C85–C123, C89–C129, C100–C107, C128–C166, C144–C180, C148–C186, and C159–C170. 3 C-linked (Man) tryptophan glycosylation sites follow: W135, W138, and W141. T147 carries O-linked (Fuc...) threonine glycosylation. Residues W192, W195, and W198 are each glycosylated (C-linked (Man) tryptophan). Cystine bridges form between C201/C244, C205/C250, and C220/C234. S204 carries O-linked (Fuc...) serine glycosylation. W256 and W259 each carry a C-linked (Man) tryptophan glycan. Disulfide bonds link C265/C302, C269/C308, and C280/C292. O-linked (Fuc...) threonine glycosylation occurs at T268. W317 and W320 each carry a C-linked (Man) tryptophan glycan. 3 disulfides stabilise this stretch: C323/C365, C332/C371, and C345/C355. The tract at residues 346-354 (GGRKFNGKP) is interaction with Complement C3 beta chain. C-linked (Man) tryptophan glycans are attached at residues W377, W380, and W383. 3 disulfides stabilise this stretch: C386/C450, C390/C456, and C402/C434. Residue N423 is glycosylated (N-linked (GlcNAc...) asparagine).

As to quaternary structure, in plasma, properdin exists as dimers, trimers or tetramers in the relative proportions of 26:54:20. Interacts with the pro-C3-convertase enzyme complex (C3b-Bb) comprised of Complement C3 beta chain (C3b) and the Complement factor B Bb fragment (Bb), where it binds (via its TSP type-1 5 domain) with C3b and Bb. This interaction stabilizes the complex and allows it to become the active C3-convertase enzyme complex (C3b-Bb-FP). Interacts with C3b. Interacts with CFB.

Its subcellular location is the secreted. Functionally, a positive regulator of the alternate pathway of complement. It binds to and stabilizes the C3- and C5-convertase enzyme complexes. Inhibits CFI-CFH mediated degradation of Inhibits CFI-CFH mediated degradation of Complement C3 beta chain (C3b). The sequence is that of Properdin (Cfp) from Mus musculus (Mouse).